The following is a 288-amino-acid chain: Quinate/shikimate dehydrogenase (288 aa).

Substrate is bound by residues K71 and D107. NAD(+)-binding positions include 132–135 (AGGA), 155–158 (NRRD), K205, 232–235 (CVYN), and G255.

The protein belongs to the shikimate dehydrogenase family. As to quaternary structure, homodimer.

It carries out the reaction L-quinate + NAD(+) = 3-dehydroquinate + NADH + H(+). It catalyses the reaction L-quinate + NADP(+) = 3-dehydroquinate + NADPH + H(+). The enzyme catalyses shikimate + NADP(+) = 3-dehydroshikimate + NADPH + H(+). The catalysed reaction is shikimate + NAD(+) = 3-dehydroshikimate + NADH + H(+). The protein operates within metabolic intermediate biosynthesis; chorismate biosynthesis; chorismate from D-erythrose 4-phosphate and phosphoenolpyruvate: step 4/7. Its function is as follows. The actual biological function of YdiB remains unclear, nor is it known whether 3-dehydroshikimate or quinate represents the natural substrate. Catalyzes the reversible NAD-dependent reduction of both 3-dehydroshikimate (DHSA) and 3-dehydroquinate to yield shikimate (SA) and quinate, respectively. It can use both NAD or NADP for catalysis, however it has higher catalytic efficiency with NAD. This chain is Quinate/shikimate dehydrogenase, found in Escherichia coli O139:H28 (strain E24377A / ETEC).